The sequence spans 85 residues: SPbeta prophage-derived uncharacterized protein YoqG (85 aa).

The protein is SPbeta prophage-derived uncharacterized protein YoqG (yoqG) of Bacillus subtilis (strain 168).